We begin with the raw amino-acid sequence, 193 residues long: Peptidyl-tRNA hydrolase 1 (193 aa).

Tyr-27 lines the tRNA pocket. His-32 functions as the Proton acceptor in the catalytic mechanism. TRNA-binding residues include Phe-80, Asn-82, and Asn-128.

This sequence belongs to the PTH family. In terms of assembly, monomer.

It is found in the cytoplasm. The catalysed reaction is an N-acyl-L-alpha-aminoacyl-tRNA + H2O = an N-acyl-L-amino acid + a tRNA + H(+). Functionally, hydrolyzes ribosome-free peptidyl-tRNAs (with 1 or more amino acids incorporated), which drop off the ribosome during protein synthesis, or as a result of ribosome stalling. In terms of biological role, catalyzes the release of premature peptidyl moieties from peptidyl-tRNA molecules trapped in stalled 50S ribosomal subunits, and thus maintains levels of free tRNAs and 50S ribosomes. In Corynebacterium jeikeium (strain K411), this protein is Peptidyl-tRNA hydrolase 1.